A 337-amino-acid chain; its full sequence is Glyceraldehyde-3-phosphate dehydrogenase 3 (337 aa).

NAD(+) is bound by residues 12–13 (RM) and Lys80. Residues 152–154 (SCT) and Thr183 each bind D-glyceraldehyde 3-phosphate. The active-site Nucleophile is Cys153. Position 184 (Asn184) interacts with NAD(+). D-glyceraldehyde 3-phosphate contacts are provided by residues Arg198, 211–212 (TG), and Arg234. Asn317 is an NAD(+) binding site.

This sequence belongs to the glyceraldehyde-3-phosphate dehydrogenase family. In terms of assembly, homotetramer.

It localises to the cytoplasm. The catalysed reaction is D-glyceraldehyde 3-phosphate + phosphate + NAD(+) = (2R)-3-phospho-glyceroyl phosphate + NADH + H(+). Its pathway is carbohydrate degradation; glycolysis; pyruvate from D-glyceraldehyde 3-phosphate: step 1/5. It participates in carbohydrate biosynthesis; gluconeogenesis. Functionally, catalyzes the oxidative phosphorylation of glyceraldehyde 3-phosphate (G3P) to 1,3-bisphosphoglycerate (BPG) using the cofactor NAD. The first reaction step involves the formation of a hemiacetal intermediate between G3P and a cysteine residue, and this hemiacetal intermediate is then oxidized to a thioester, with concomitant reduction of NAD to NADH. The reduced NADH is then exchanged with the second NAD, and the thioester is attacked by a nucleophilic inorganic phosphate to produce BPG. The protein is Glyceraldehyde-3-phosphate dehydrogenase 3 (gap3) of Nostoc sp. (strain PCC 7120 / SAG 25.82 / UTEX 2576).